Reading from the N-terminus, the 315-residue chain is MQPVHTSVLLEECLEFLKPDASDNLFVDGTLGEGGHTEAFLKRYPQLNAIGVDADVSIQERAKERLKPFGERIRFHLGWSDEFFKNYPKDFAPPNLILLDLGISMFHYVKSGRGFSFSSDEPLDMRLNPELRLSAADIVNSYNEKDLADLIFNYGEERYSRKIASRIVEQRAAAAFSNAKELADCIYKAVPQNYRHGKIHPATKTFQALRIAVNGELDRLPRLLEAAFSVLAPNGRLGLITFHSLEDRIVKFYFKELGKSCTCPENMPICKCGGRPRAEVLTKKAVKASDEEIRLNPPSRSARLRVVRKIDYRES.

Residues 34-36, Asp53, Asp100, and His107 contribute to the S-adenosyl-L-methionine site; that span reads GGH.

It belongs to the methyltransferase superfamily. RsmH family.

Its subcellular location is the cytoplasm. The catalysed reaction is cytidine(1402) in 16S rRNA + S-adenosyl-L-methionine = N(4)-methylcytidine(1402) in 16S rRNA + S-adenosyl-L-homocysteine + H(+). Specifically methylates the N4 position of cytidine in position 1402 (C1402) of 16S rRNA. This Treponema denticola (strain ATCC 35405 / DSM 14222 / CIP 103919 / JCM 8153 / KCTC 15104) protein is Ribosomal RNA small subunit methyltransferase H.